The primary structure comprises 67 residues: Large ribosomal subunit protein bL35 (67 aa).

The tract at residues Met1 to Gly20 is disordered.

The protein belongs to the bacterial ribosomal protein bL35 family.

The sequence is that of Large ribosomal subunit protein bL35 from Anaeromyxobacter dehalogenans (strain 2CP-1 / ATCC BAA-258).